A 115-amino-acid polypeptide reads, in one-letter code: NADH-ubiquinone oxidoreductase chain 3 (115 aa).

3 consecutive transmembrane segments (helical) span residues 5–25, 55–75, and 86–106; these read TALLVNITLSMLLIIVAFWFF, FFLVAITFLLFDLEIALLLPL, and IMMLTAFILISVLALGLAYEW.

This sequence belongs to the complex I subunit 3 family. Core subunit of respiratory chain NADH dehydrogenase (Complex I) which is composed of 45 different subunits. Interacts with TMEM186. Interacts with TMEM242.

It localises to the mitochondrion inner membrane. The enzyme catalyses a ubiquinone + NADH + 5 H(+)(in) = a ubiquinol + NAD(+) + 4 H(+)(out). Functionally, core subunit of the mitochondrial membrane respiratory chain NADH dehydrogenase (Complex I) which catalyzes electron transfer from NADH through the respiratory chain, using ubiquinone as an electron acceptor. Essential for the catalytic activity of complex I. This Peromyscus sejugis (Santa Cruz mouse) protein is NADH-ubiquinone oxidoreductase chain 3.